A 494-amino-acid chain; its full sequence is Probable cytosol aminopeptidase (494 aa).

Positions 260 and 265 each coordinate Mn(2+). Residue Lys272 is part of the active site. Mn(2+) contacts are provided by Asp283, Asp342, and Glu344. Arg346 is an active-site residue.

It belongs to the peptidase M17 family. The cofactor is Mn(2+).

The protein localises to the cytoplasm. The enzyme catalyses Release of an N-terminal amino acid, Xaa-|-Yaa-, in which Xaa is preferably Leu, but may be other amino acids including Pro although not Arg or Lys, and Yaa may be Pro. Amino acid amides and methyl esters are also readily hydrolyzed, but rates on arylamides are exceedingly low.. The catalysed reaction is Release of an N-terminal amino acid, preferentially leucine, but not glutamic or aspartic acids.. Its function is as follows. Presumably involved in the processing and regular turnover of intracellular proteins. Catalyzes the removal of unsubstituted N-terminal amino acids from various peptides. This chain is Probable cytosol aminopeptidase, found in Bacillus mycoides (strain KBAB4) (Bacillus weihenstephanensis).